Here is a 387-residue protein sequence, read N- to C-terminus: 17-beta-hydroxysteroid dehydrogenase type 2 (387 aa).

The helical; Signal-anchor for type II membrane protein transmembrane segment at Phe4–Phe24 threads the bilayer. Residue Gln82–Ala111 coordinates NAD(+). Ser219 is a substrate binding site. Tyr232 is an active-site residue.

This sequence belongs to the short-chain dehydrogenases/reductases (SDR) family. Homodimer. In terms of tissue distribution, expressed in placenta.

It localises to the endoplasmic reticulum membrane. The catalysed reaction is 17beta-estradiol + NAD(+) = estrone + NADH + H(+). It carries out the reaction testosterone + NAD(+) = androst-4-ene-3,17-dione + NADH + H(+). The enzyme catalyses 17beta-hydroxy-5alpha-androstan-3-one + NAD(+) = 5alpha-androstan-3,17-dione + NADH + H(+). It catalyses the reaction (20S)-hydroxypregn-4-en-3-one + NAD(+) = progesterone + NADH + H(+). Its function is as follows. Catalyzes the NAD-dependent oxidation of the highly active 17beta-hydroxysteroids, such as estradiol (E2), testosterone (T), and dihydrotestosterone (DHT), to their less active forms and thus regulates the biological potency of these steroids. Oxidizes estradiol to estrone, testosterone to androstenedione, and dihydrotestosterone to 5alpha-androstan-3,17-dione. Also has 20-alpha-HSD activity. The polypeptide is 17-beta-hydroxysteroid dehydrogenase type 2 (Homo sapiens (Human)).